Reading from the N-terminus, the 187-residue chain is UPF0301 protein Clim_0777 (187 aa).

The protein belongs to the UPF0301 (AlgH) family.

This chain is UPF0301 protein Clim_0777, found in Chlorobium limicola (strain DSM 245 / NBRC 103803 / 6330).